The following is a 519-amino-acid chain: Bifunctional purine biosynthesis protein PurH (519 aa).

The 145-residue stretch at 1–145 (MQPIQRALIS…KNHASVTVVV (145 aa)) folds into the MGS-like domain.

This sequence belongs to the PurH family.

It carries out the reaction (6R)-10-formyltetrahydrofolate + 5-amino-1-(5-phospho-beta-D-ribosyl)imidazole-4-carboxamide = 5-formamido-1-(5-phospho-D-ribosyl)imidazole-4-carboxamide + (6S)-5,6,7,8-tetrahydrofolate. The catalysed reaction is IMP + H2O = 5-formamido-1-(5-phospho-D-ribosyl)imidazole-4-carboxamide. The protein operates within purine metabolism; IMP biosynthesis via de novo pathway; 5-formamido-1-(5-phospho-D-ribosyl)imidazole-4-carboxamide from 5-amino-1-(5-phospho-D-ribosyl)imidazole-4-carboxamide (10-formyl THF route): step 1/1. It participates in purine metabolism; IMP biosynthesis via de novo pathway; IMP from 5-formamido-1-(5-phospho-D-ribosyl)imidazole-4-carboxamide: step 1/1. This chain is Bifunctional purine biosynthesis protein PurH, found in Allochromatium vinosum (strain ATCC 17899 / DSM 180 / NBRC 103801 / NCIMB 10441 / D) (Chromatium vinosum).